The sequence spans 196 residues: GTP cyclohydrolase 1 (196 aa).

Zn(2+)-binding residues include Cys-84, His-87, and Cys-157.

It belongs to the GTP cyclohydrolase I family. In terms of assembly, toroid-shaped homodecamer, composed of two pentamers of five dimers.

It carries out the reaction GTP + H2O = 7,8-dihydroneopterin 3'-triphosphate + formate + H(+). It functions in the pathway cofactor biosynthesis; 7,8-dihydroneopterin triphosphate biosynthesis; 7,8-dihydroneopterin triphosphate from GTP: step 1/1. In Corynebacterium glutamicum (strain ATCC 13032 / DSM 20300 / JCM 1318 / BCRC 11384 / CCUG 27702 / LMG 3730 / NBRC 12168 / NCIMB 10025 / NRRL B-2784 / 534), this protein is GTP cyclohydrolase 1.